Here is a 176-residue protein sequence, read N- to C-terminus: Transmembrane protein 238 (176 aa).

The tract at residues 1–21 (MAAASPVCGSQASAVGASSPP) is disordered. Over 1–36 (MAAASPVCGSQASAVGASSPPAPAPAPAAGLGRCRM) the chain is Cytoplasmic. A compositionally biased stretch (low complexity) spans 9–19 (GSQASAVGASS). Residues 37-57 (ALLLAVALDVAGMAALLTGVF) form a helical membrane-spanning segment. Residues 58–69 (AQLQVRGRDFGD) are Extracellular-facing. The chain crosses the membrane as a helical span at residues 70–90 (LLIYSGALLVFLSLLGWILWY). Topologically, residues 91-176 (TGNIEISRQE…GSVAAGTGSE (86 aa)) are cytoplasmic. Residues 124 to 135 (SAPATASPRTTA) are compositionally biased toward low complexity. A disordered region spans residues 124-156 (SAPATASPRTTAGLRSARRANRAPQPSSSGSRR). Residue Ser175 is modified to Phosphoserine.

Its subcellular location is the membrane. This chain is Transmembrane protein 238 (Tmem238), found in Mus musculus (Mouse).